Consider the following 490-residue polypeptide: Bifunctional protein HldE (490 aa).

Positions 1–330 are ribokinase; that stretch reads MLDFEQLSPA…RKILPHAFLA (330 aa). An ATP-binding site is contributed by 205-208; the sequence is NRKE. D275 is an active-site residue. Residues 358-490 form a cytidylyltransferase region; that stretch reads FTNGCFDILH…LVARAQNGKS (133 aa).

In the N-terminal section; belongs to the carbohydrate kinase PfkB family. The protein in the C-terminal section; belongs to the cytidylyltransferase family. Homodimer.

The enzyme catalyses D-glycero-beta-D-manno-heptose 7-phosphate + ATP = D-glycero-beta-D-manno-heptose 1,7-bisphosphate + ADP + H(+). The catalysed reaction is D-glycero-beta-D-manno-heptose 1-phosphate + ATP + H(+) = ADP-D-glycero-beta-D-manno-heptose + diphosphate. The protein operates within nucleotide-sugar biosynthesis; ADP-L-glycero-beta-D-manno-heptose biosynthesis; ADP-L-glycero-beta-D-manno-heptose from D-glycero-beta-D-manno-heptose 7-phosphate: step 1/4. Its pathway is nucleotide-sugar biosynthesis; ADP-L-glycero-beta-D-manno-heptose biosynthesis; ADP-L-glycero-beta-D-manno-heptose from D-glycero-beta-D-manno-heptose 7-phosphate: step 3/4. Its function is as follows. Catalyzes the phosphorylation of D-glycero-D-manno-heptose 7-phosphate at the C-1 position to selectively form D-glycero-beta-D-manno-heptose-1,7-bisphosphate. Catalyzes the ADP transfer from ATP to D-glycero-beta-D-manno-heptose 1-phosphate, yielding ADP-D-glycero-beta-D-manno-heptose. The protein is Bifunctional protein HldE of Rhodopseudomonas palustris (strain BisA53).